A 250-amino-acid polypeptide reads, in one-letter code: tRNA (guanine-N(1)-)-methyltransferase (250 aa).

Residues Gly-116 and 136-141 (IGDYVL) each bind S-adenosyl-L-methionine.

It belongs to the RNA methyltransferase TrmD family. As to quaternary structure, homodimer.

It localises to the cytoplasm. The enzyme catalyses guanosine(37) in tRNA + S-adenosyl-L-methionine = N(1)-methylguanosine(37) in tRNA + S-adenosyl-L-homocysteine + H(+). Functionally, specifically methylates guanosine-37 in various tRNAs. This chain is tRNA (guanine-N(1)-)-methyltransferase, found in Pseudomonas putida (strain ATCC 700007 / DSM 6899 / JCM 31910 / BCRC 17059 / LMG 24140 / F1).